Reading from the N-terminus, the 54-residue chain is MPQLNPSPWLLMALSLWVCFPLMMLSLSSFLPLTLKTSLPSTLKSSPNPWILPW.

Residues 13–35 traverse the membrane as a helical segment; it reads ALSLWVCFPLMMLSLSSFLPLTL.

This sequence belongs to the ATPase protein 8 family. Component of the ATP synthase complex composed at least of ATP5F1A/subunit alpha, ATP5F1B/subunit beta, ATP5MC1/subunit c (homooctomer), MT-ATP6/subunit a, MT-ATP8/subunit 8, ATP5ME/subunit e, ATP5MF/subunit f, ATP5MG/subunit g, ATP5MK/subunit k, ATP5MJ/subunit j, ATP5F1C/subunit gamma, ATP5F1D/subunit delta, ATP5F1E/subunit epsilon, ATP5PF/subunit F6, ATP5PB/subunit b, ATP5PD/subunit d, ATP5PO/subunit OSCP. ATP synthase complex consists of a soluble F(1) head domain (subunits alpha(3) and beta(3)) - the catalytic core - and a membrane F(0) domain - the membrane proton channel (subunits c, a, 8, e, f, g, k and j). These two domains are linked by a central stalk (subunits gamma, delta, and epsilon) rotating inside the F1 region and a stationary peripheral stalk (subunits F6, b, d, and OSCP).

The protein resides in the mitochondrion membrane. Its function is as follows. Subunit 8, of the mitochondrial membrane ATP synthase complex (F(1)F(0) ATP synthase or Complex V) that produces ATP from ADP in the presence of a proton gradient across the membrane which is generated by electron transport complexes of the respiratory chain. ATP synthase complex consist of a soluble F(1) head domain - the catalytic core - and a membrane F(1) domain - the membrane proton channel. These two domains are linked by a central stalk rotating inside the F(1) region and a stationary peripheral stalk. During catalysis, ATP synthesis in the catalytic domain of F(1) is coupled via a rotary mechanism of the central stalk subunits to proton translocation. In vivo, can only synthesize ATP although its ATP hydrolase activity can be activated artificially in vitro. Part of the complex F(0) domain. The sequence is that of ATP synthase F(0) complex subunit 8 from Myxine glutinosa (Atlantic hagfish).